The sequence spans 101 residues: Small ribosomal subunit protein uS14 (101 aa).

It belongs to the universal ribosomal protein uS14 family. In terms of assembly, part of the 30S ribosomal subunit. Contacts proteins S3 and S10.

Functionally, binds 16S rRNA, required for the assembly of 30S particles and may also be responsible for determining the conformation of the 16S rRNA at the A site. The chain is Small ribosomal subunit protein uS14 from Brucella abortus (strain S19).